A 641-amino-acid polypeptide reads, in one-letter code: Chaperone protein DnaK (641 aa).

Phosphothreonine; by autocatalysis is present on Thr-200. Positions 605–623 (AAEQGGSADAASGNAQASK) are enriched in low complexity. Residues 605–628 (AAEQGGSADAASGNAQASKAADDV) form a disordered region.

Belongs to the heat shock protein 70 family.

In terms of biological role, acts as a chaperone. In Xanthomonas oryzae pv. oryzae (strain KACC10331 / KXO85), this protein is Chaperone protein DnaK.